Here is a 226-residue protein sequence, read N- to C-terminus: ATP-dependent dethiobiotin synthetase BioD (226 aa).

Position 14 to 19 (14 to 19 (GIGKTF)) interacts with ATP. Residue threonine 18 coordinates Mg(2+). Lysine 39 is a catalytic residue. Serine 43 contacts substrate. ATP is bound by residues aspartate 56, 117–120 (EGVG), 177–178 (NT), 206–208 (PHI), and asparagine 213. Aspartate 56 and glutamate 117 together coordinate Mg(2+).

It belongs to the dethiobiotin synthetase family. In terms of assembly, homodimer. The cofactor is Mg(2+).

The protein resides in the cytoplasm. The catalysed reaction is (7R,8S)-7,8-diammoniononanoate + CO2 + ATP = (4R,5S)-dethiobiotin + ADP + phosphate + 3 H(+). It participates in cofactor biosynthesis; biotin biosynthesis; biotin from 7,8-diaminononanoate: step 1/2. Its function is as follows. Catalyzes a mechanistically unusual reaction, the ATP-dependent insertion of CO2 between the N7 and N8 nitrogen atoms of 7,8-diaminopelargonic acid (DAPA, also called 7,8-diammoniononanoate) to form a ureido ring. This chain is ATP-dependent dethiobiotin synthetase BioD, found in Xylella fastidiosa (strain M12).